Consider the following 278-residue polypeptide: Bifunctional protein FolD (278 aa).

Residues 165-167, Ser190, and Thr231 contribute to the NADP(+) site; that span reads GRS.

The protein belongs to the tetrahydrofolate dehydrogenase/cyclohydrolase family. As to quaternary structure, homodimer.

The enzyme catalyses (6R)-5,10-methylene-5,6,7,8-tetrahydrofolate + NADP(+) = (6R)-5,10-methenyltetrahydrofolate + NADPH. It catalyses the reaction (6R)-5,10-methenyltetrahydrofolate + H2O = (6R)-10-formyltetrahydrofolate + H(+). It functions in the pathway one-carbon metabolism; tetrahydrofolate interconversion. Catalyzes the oxidation of 5,10-methylenetetrahydrofolate to 5,10-methenyltetrahydrofolate and then the hydrolysis of 5,10-methenyltetrahydrofolate to 10-formyltetrahydrofolate. The polypeptide is Bifunctional protein FolD (Clostridium novyi (strain NT)).